A 705-amino-acid polypeptide reads, in one-letter code: Phosphatidylinositol 4-phosphate 5-kinase 3 (705 aa).

MORN repeat units lie at residues 58–80 (YNGG…DGCM), 81–103 (YEGE…SGAT), 104–126 (YEGQ…DGDT), 127–149 (YRGH…NGDG), 150–172 (YQGN…DGNE), 173–195 (YVGE…NGNR), and 196–218 (YDGL…EEKT). Residues 321–701 (TVTAGHKNYD…RFRDFINKIF (381 aa)) form the PIPK domain. An activation loop region spans residues 661 to 682 (YDITKKLEHAYKSLHADPASIS).

The protein localises to the cell membrane. The catalysed reaction is a 1,2-diacyl-sn-glycero-3-phospho-(1D-myo-inositol 4-phosphate) + ATP = a 1,2-diacyl-sn-glycero-3-phospho-(1D-myo-inositol-4,5-bisphosphate) + ADP + H(+). Functionally, with DRP1A and DRP2B, required for the precise coordination of polar ARAC3/ROP6 and ARAC4/ROP2 placement and subsequent root hair positioning during planar polarity formation in root hair-forming cells, probably by mediating the correct basal-to-planar polarity switching of D6PK into the polar, lipid-enriched domain. The sequence is that of Phosphatidylinositol 4-phosphate 5-kinase 3 from Arabidopsis thaliana (Mouse-ear cress).